A 352-amino-acid chain; its full sequence is C-C chemokine receptor type 5 (352 aa).

Topologically, residues 1–30 (MDYQVSSPTYDIDYYTSEPCQKVNVKQIAA) are extracellular. Residue tyrosine 3 is modified to Sulfotyrosine. Serine 6 and serine 7 each carry an O-linked (GalNAc...) serine glycan. 3 positions are modified to sulfotyrosine: tyrosine 10, tyrosine 14, and tyrosine 15. 2 cysteine pairs are disulfide-bonded: cysteine 20/cysteine 269 and cysteine 101/cysteine 178. Residues 31–58 (RLLPPLYSLVFIFGFVGNILVVLILINC) form a helical membrane-spanning segment. The Cytoplasmic segment spans residues 59-68 (KRLKSMTDIY). Residues 69–89 (LLNLAISDLFFLLTVPFWAHY) traverse the membrane as a helical segment. Over 90-102 (AAAQWDFGNTMCQ) the chain is Extracellular. The helical transmembrane segment at 103–124 (LLTGLYFIGFFSGIFFIILLTI) threads the bilayer. Residues 125–141 (DRYLAIVHAVFALKART) lie on the Cytoplasmic side of the membrane. Residues 142–166 (VTFGVVTSVITWVVAVFASLPGIIF) form a helical membrane-spanning segment. Residues 167 to 198 (TRSQREGLHYTCSSHFPYSQYQFWKNFQTLKI) lie on the Extracellular side of the membrane. Residues 199 to 218 (VILGLVLPLLIMVICYSGIL) form a helical membrane-spanning segment. Topologically, residues 219–235 (KTLLRCRNEKKRHRAVR) are cytoplasmic. Residues 236 to 260 (LIFTIMIVYFLFWAPYNIVLLLNTF) form a helical membrane-spanning segment. The Extracellular portion of the chain corresponds to 261–277 (QEFFGLNNCSSSNRLDQ). A helical membrane pass occupies residues 278–301 (AMQVTETLGMTHCCINPIIYAFVG). Residues 302–352 (EKFRNYLLVFFQKHIAKRFCKCCSIFQQEAPERASSVYTRSTGEHEISVGL) lie on the Cytoplasmic side of the membrane. Residues cysteine 321, cysteine 323, and cysteine 324 are each lipidated (S-palmitoyl cysteine). Serine 336, serine 337, serine 342, and serine 349 each carry phosphoserine; by BARK1.

It belongs to the G-protein coupled receptor 1 family. As to quaternary structure, interacts with PRAF2. Efficient ligand binding to CCL3/MIP-1alpha and CCL4/MIP-1beta requires sulfation, O-glycosylation and sialic acid modifications. Glycosylation on Ser-6 is required for efficient binding of CCL4. Interacts with GRK2. Interacts with ARRB1 and ARRB2. Interacts with CNIH4. Interacts with S100A4; this interaction stimulates T-lymphocyte chemotaxis. Sulfated on at least 2 of the N-terminal tyrosines. Sulfation is required for efficient binding of the chemokines, CCL3 and CCL4. In terms of processing, palmitoylation in the C-terminal is important for cell surface expression. Post-translationally, phosphorylation on serine residues in the C-terminal is stimulated by binding CC chemokines especially by APO-RANTES. O-glycosylated, but not N-glycosylated. Ser-6 appears to be the major site even if Ser-7 may be also O-glycosylated. Also sialylated glycans present which contribute to chemokine binding. Thr-16 and Ser-17 may also be glycosylated and, if so, with small moieties such as a T-antigen.

It localises to the cell membrane. Its function is as follows. Receptor for a number of inflammatory CC-chemokines including CCL3/MIP-1-alpha, CCL4/MIP-1-beta and RANTES and subsequently transduces a signal by increasing the intracellular calcium ion level. May play a role in the control of granulocytic lineage proliferation or differentiation. Participates in T-lymphocyte migration to the infection site by acting as a chemotactic receptor. The sequence is that of C-C chemokine receptor type 5 (CCR5) from Pygathrix nemaeus (Red-shanked douc langur).